The sequence spans 511 residues: Mediator of RNA polymerase II transcription subunit 17 (511 aa).

It belongs to the Mediator complex subunit 17 family. In terms of assembly, component of the Mediator complex.

The protein resides in the nucleus. Its function is as follows. Component of the Mediator complex, a coactivator involved in the regulated transcription of nearly all RNA polymerase II-dependent genes. Mediator functions as a bridge to convey information from gene-specific regulatory proteins to the basal RNA polymerase II transcription machinery. Mediator is recruited to promoters by direct interactions with regulatory proteins and serves as a scaffold for the assembly of a functional preinitiation complex with RNA polymerase II and the general transcription factors. This is Mediator of RNA polymerase II transcription subunit 17 (SRB4) from Yarrowia lipolytica (strain CLIB 122 / E 150) (Yeast).